The following is a 386-amino-acid chain: ORC1-type DNA replication protein 3 (386 aa).

ATP contacts are provided by residues 65-69 and Y206; that span reads TGKTF.

The protein belongs to the CDC6/cdc18 family.

Its function is as follows. Involved in regulation of DNA replication. The chain is ORC1-type DNA replication protein 3 (cdc6-3) from Sulfurisphaera tokodaii (strain DSM 16993 / JCM 10545 / NBRC 100140 / 7) (Sulfolobus tokodaii).